Reading from the N-terminus, the 923-residue chain is Protocadherin gamma-B4 (923 aa).

Residues M1–C30 form the signal peptide. Cadherin domains lie at E31–F133, T134–F242, S243–V345, I346–F450, S451–V560, and D568–I673. The Extracellular portion of the chain corresponds to E31–Y689. N-linked (GlcNAc...) asparagine glycosylation is found at N417 and N543. A helical transmembrane segment spans residues L690–A710. At L711–K923 the chain is on the cytoplasmic side. Disordered stretches follow at residues S797 to N832 and A893 to K923. The span at N913–K923 shows a compositional bias: basic residues.

Its subcellular location is the cell membrane. Functionally, potential calcium-dependent cell-adhesion protein. May be involved in the establishment and maintenance of specific neuronal connections in the brain. This chain is Protocadherin gamma-B4 (PCDHGB4), found in Homo sapiens (Human).